The following is a 572-amino-acid chain: Proline--tRNA ligase (572 aa).

It belongs to the class-II aminoacyl-tRNA synthetase family. ProS type 1 subfamily. Homodimer.

It is found in the cytoplasm. It carries out the reaction tRNA(Pro) + L-proline + ATP = L-prolyl-tRNA(Pro) + AMP + diphosphate. In terms of biological role, catalyzes the attachment of proline to tRNA(Pro) in a two-step reaction: proline is first activated by ATP to form Pro-AMP and then transferred to the acceptor end of tRNA(Pro). As ProRS can inadvertently accommodate and process non-cognate amino acids such as alanine and cysteine, to avoid such errors it has two additional distinct editing activities against alanine. One activity is designated as 'pretransfer' editing and involves the tRNA(Pro)-independent hydrolysis of activated Ala-AMP. The other activity is designated 'posttransfer' editing and involves deacylation of mischarged Ala-tRNA(Pro). The misacylated Cys-tRNA(Pro) is not edited by ProRS. In Yersinia pseudotuberculosis serotype IB (strain PB1/+), this protein is Proline--tRNA ligase.